The chain runs to 341 residues: RNA 3'-terminal phosphate cyclase (341 aa).

Residues Gln-102 and 283 to 287 each bind ATP; that span reads HLADQ. Catalysis depends on His-308, which acts as the Tele-AMP-histidine intermediate.

This sequence belongs to the RNA 3'-terminal cyclase family. Type 1 subfamily.

The protein resides in the cytoplasm. It carries out the reaction a 3'-end 3'-phospho-ribonucleotide-RNA + ATP = a 3'-end 2',3'-cyclophospho-ribonucleotide-RNA + AMP + diphosphate. In terms of biological role, catalyzes the conversion of 3'-phosphate to a 2',3'-cyclic phosphodiester at the end of RNA. The mechanism of action of the enzyme occurs in 3 steps: (A) adenylation of the enzyme by ATP; (B) transfer of adenylate to an RNA-N3'P to produce RNA-N3'PP5'A; (C) and attack of the adjacent 2'-hydroxyl on the 3'-phosphorus in the diester linkage to produce the cyclic end product. The biological role of this enzyme is unknown but it is likely to function in some aspects of cellular RNA processing. The sequence is that of RNA 3'-terminal phosphate cyclase from Pseudomonas aeruginosa (strain LESB58).